The following is a 246-amino-acid chain: Ribonuclease PH (246 aa).

Positions 1–33 (MTPPKLPVREGRDALTPRPVSVQRGVNPHAPGS) are disordered. Residues arginine 90 and 128 to 130 (GTR) contribute to the phosphate site.

The protein belongs to the RNase PH family. Homohexameric ring arranged as a trimer of dimers.

The enzyme catalyses tRNA(n+1) + phosphate = tRNA(n) + a ribonucleoside 5'-diphosphate. Phosphorolytic 3'-5' exoribonuclease that plays an important role in tRNA 3'-end maturation. Removes nucleotide residues following the 3'-CCA terminus of tRNAs; can also add nucleotides to the ends of RNA molecules by using nucleoside diphosphates as substrates, but this may not be physiologically important. Probably plays a role in initiation of 16S rRNA degradation (leading to ribosome degradation) during starvation. In Deinococcus radiodurans (strain ATCC 13939 / DSM 20539 / JCM 16871 / CCUG 27074 / LMG 4051 / NBRC 15346 / NCIMB 9279 / VKM B-1422 / R1), this protein is Ribonuclease PH.